The following is a 592-amino-acid chain: Insulin-like growth factor 2 mRNA-binding protein 2 (592 aa).

RRM domains follow at residues 3 to 76 (NKLY…YSVS) and 82 to 157 (RRIQ…YIPD). Phosphoserine is present on S11. The interval 157-182 (DEEVSSPSPPHRAREQGHGPGSSSQA) is disordered. S162 and S164 each carry phosphoserine. 4 KH domains span residues 186-251 (DFPL…CRMI), 267-334 (EVPL…EIEI), 420-485 (QETV…QGRI), and 502-568 (KLEA…QRKI). Position 543 is a phosphothreonine (T543).

It belongs to the RRM IMP/VICKZ family. As to quaternary structure, can form homooligomers and heterooligomers with IGF2BP1 and IGF2BP3 in an RNA-dependent manner. Interacts with HNRPD. Interacts with IGF2BP1. Interacts with ELAVL1, DHX9, HNRNPU, MATR3 and PABPC1. Expressed in oocytes, granulosa cells of small and growing follicles and Leydig cells of the testis (at protein level). Expressed in testis and ovary.

It is found in the nucleus. Its subcellular location is the cytoplasm. The protein resides in the P-body. It localises to the stress granule. Functionally, RNA-binding factor that recruits target transcripts to cytoplasmic protein-RNA complexes (mRNPs). This transcript 'caging' into mRNPs allows mRNA transport and transient storage. It also modulates the rate and location at which target transcripts encounter the translational apparatus and shields them from endonuclease attacks or microRNA-mediated degradation. Preferentially binds to N6-methyladenosine (m6A)-containing mRNAs and increases their stability. Binds to the 5'-UTR of the insulin-like growth factor 2 (IGF2) mRNAs. Binding is isoform-specific. Binds to beta-actin/ACTB and MYC transcripts. Increases MYC mRNA stability by binding to the coding region instability determinant (CRD) and binding is enhanced by m6A-modification of the CRD. This chain is Insulin-like growth factor 2 mRNA-binding protein 2 (Igf2bp2), found in Mus musculus (Mouse).